Reading from the N-terminus, the 777-residue chain is Phosphoribosylformylglycinamidine synthase subunit PurL (777 aa).

His50 is an active-site residue. Positions 53 and 92 each coordinate ATP. Position 94 (Glu94) interacts with Mg(2+). Substrate-binding positions include 95–98 and Arg117; that span reads SHNH. The active-site Proton acceptor is the His96. A Mg(2+)-binding site is contributed by Asp118. Gln241 serves as a coordination point for substrate. Asp269 serves as a coordination point for Mg(2+). 313-315 serves as a coordination point for substrate; sequence ESQ. 2 residues coordinate ATP: Asp520 and Gly557. A Mg(2+)-binding site is contributed by Asn558. Position 560 (Ser560) interacts with substrate.

It belongs to the FGAMS family. Monomer. Part of the FGAM synthase complex composed of 1 PurL, 1 PurQ and 2 PurS subunits.

It localises to the cytoplasm. The catalysed reaction is N(2)-formyl-N(1)-(5-phospho-beta-D-ribosyl)glycinamide + L-glutamine + ATP + H2O = 2-formamido-N(1)-(5-O-phospho-beta-D-ribosyl)acetamidine + L-glutamate + ADP + phosphate + H(+). Its pathway is purine metabolism; IMP biosynthesis via de novo pathway; 5-amino-1-(5-phospho-D-ribosyl)imidazole from N(2)-formyl-N(1)-(5-phospho-D-ribosyl)glycinamide: step 1/2. Part of the phosphoribosylformylglycinamidine synthase complex involved in the purines biosynthetic pathway. Catalyzes the ATP-dependent conversion of formylglycinamide ribonucleotide (FGAR) and glutamine to yield formylglycinamidine ribonucleotide (FGAM) and glutamate. The FGAM synthase complex is composed of three subunits. PurQ produces an ammonia molecule by converting glutamine to glutamate. PurL transfers the ammonia molecule to FGAR to form FGAM in an ATP-dependent manner. PurS interacts with PurQ and PurL and is thought to assist in the transfer of the ammonia molecule from PurQ to PurL. This Trichormus variabilis (strain ATCC 29413 / PCC 7937) (Anabaena variabilis) protein is Phosphoribosylformylglycinamidine synthase subunit PurL.